Here is a 630-residue protein sequence, read N- to C-terminus: UvrABC system protein C (630 aa).

The tract at residues 1–96 (MGAEGLQGEG…GEAHRRGGTG (96 aa)) is disordered. Low complexity predominate over residues 9 to 28 (EGEVPPQGAGVPGQVQVGVH). Residues 52–125 (DPRGLPVEAG…IKAHRPLYNV (74 aa)) form the GIY-YIG domain. Positions 75–91 (RPGEKLLPRRGQGEAHR) are enriched in basic and acidic residues. In terms of domain architecture, UVR spans 234–269 (DGLLQELEAKMREAARRLEFERAAEIRDQMEALRAF).

It belongs to the UvrC family. In terms of assembly, interacts with UvrB in an incision complex.

Its subcellular location is the cytoplasm. Functionally, the UvrABC repair system catalyzes the recognition and processing of DNA lesions. UvrC both incises the 5' and 3' sides of the lesion. The N-terminal half is responsible for the 3' incision and the C-terminal half is responsible for the 5' incision. This is UvrABC system protein C from Thermus thermophilus (strain ATCC BAA-163 / DSM 7039 / HB27).